Here is a 382-residue protein sequence, read N- to C-terminus: D-galactonate dehydratase (382 aa).

Asp-183 contributes to the Mg(2+) binding site. His-185 acts as the Proton donor in catalysis. Mg(2+) contacts are provided by Glu-209 and Glu-235. The active-site Proton acceptor is the His-285.

The protein belongs to the mandelate racemase/muconate lactonizing enzyme family. GalD subfamily. Mg(2+) is required as a cofactor.

The catalysed reaction is D-galactonate = 2-dehydro-3-deoxy-D-galactonate + H2O. Its pathway is carbohydrate acid metabolism; D-galactonate degradation; D-glyceraldehyde 3-phosphate and pyruvate from D-galactonate: step 1/3. Its function is as follows. Catalyzes the dehydration of D-galactonate to 2-keto-3-deoxy-D-galactonate. The sequence is that of D-galactonate dehydratase from Escherichia coli O45:K1 (strain S88 / ExPEC).